The chain runs to 504 residues: MTTPSVSNAVSSPAVTAETPVRVRFCPSPTGTPHVGLIRTALFNWAYARHTQGTFVFRIEDTDAARDSEESYEQLLEALKWLGISWEEGVETGGPHEPYRQSQRLDLYKDVVAKLLEAGYAYECYSSPEEVEARHRAAGRDPKLGYDNFDRNLSAEQVAAFKAEGREPVLRVRMPDEDVTFTDMVRGEITFKAGSIPDYVIVRADGSPLYTLVNPVDDALMGITHVLRGEDLLSSTPRQVVLIRALMEIGVASYMPVFGHLPYVMGEGNKKLSKRDPQSNLFLLRDRGFIPEGLLNYLSLLGWSLSADEDIFTVEQLIEHFDVHDVLANPARFDIKKAEAINGTHIRMLDADDFRGRLVPYLRAANLVGETLTAREEEILTEAAPLIQERIALLGEAPEMISFLFKNDDAIDVADDARKGLPENLTEVLDAAIAALDAVADWSAESIQTALKQALVEDMGIKPRLAFGPVRTAVSGRRISPPLFESMVILGKASSLARLHAFRG.

Positions 27 to 37 (PSPTGTPHVGL) match the 'HIGH' region motif. The 'KMSKS' region signature appears at 271 to 275 (KLSKR). K274 lines the ATP pocket.

Belongs to the class-I aminoacyl-tRNA synthetase family. Glutamate--tRNA ligase type 1 subfamily. Monomer.

Its subcellular location is the cytoplasm. The enzyme catalyses tRNA(Glu) + L-glutamate + ATP = L-glutamyl-tRNA(Glu) + AMP + diphosphate. Catalyzes the attachment of glutamate to tRNA(Glu) in a two-step reaction: glutamate is first activated by ATP to form Glu-AMP and then transferred to the acceptor end of tRNA(Glu). This Arthrobacter sp. (strain FB24) protein is Glutamate--tRNA ligase.